A 272-amino-acid polypeptide reads, in one-letter code: Orotidine 5'-phosphate decarboxylase (272 aa).

The active-site Proton donor is the lysine 96.

It belongs to the OMP decarboxylase family. Type 2 subfamily.

The enzyme catalyses orotidine 5'-phosphate + H(+) = UMP + CO2. It functions in the pathway pyrimidine metabolism; UMP biosynthesis via de novo pathway; UMP from orotate: step 2/2. The sequence is that of Orotidine 5'-phosphate decarboxylase from Christiangramia forsetii (strain DSM 17595 / CGMCC 1.15422 / KT0803) (Gramella forsetii).